Here is a 151-residue protein sequence, read N- to C-terminus: Lipoprotein signal peptidase (151 aa).

3 helical membrane passes run 3 to 23, 59 to 79, and 85 to 107; these read LYII…GWIV, WFFY…FYTS, and LYRI…RLHL. Residues Asp112 and Asp128 contribute to the active site. The chain crosses the membrane as a helical span at residues 123 to 143; that stretch reads IFNVADTALTCGVICVFIAIL.

It belongs to the peptidase A8 family.

Its subcellular location is the cell membrane. The enzyme catalyses Release of signal peptides from bacterial membrane prolipoproteins. Hydrolyzes -Xaa-Yaa-Zaa-|-(S,diacylglyceryl)Cys-, in which Xaa is hydrophobic (preferably Leu), and Yaa (Ala or Ser) and Zaa (Gly or Ala) have small, neutral side chains.. It participates in protein modification; lipoprotein biosynthesis (signal peptide cleavage). This protein specifically catalyzes the removal of signal peptides from prolipoproteins. The polypeptide is Lipoprotein signal peptidase (Latilactobacillus sakei subsp. sakei (strain 23K) (Lactobacillus sakei subsp. sakei)).